Consider the following 458-residue polypeptide: tRNA modification GTPase MnmE (458 aa).

3 residues coordinate (6S)-5-formyl-5,6,7,8-tetrahydrofolate: Arg-22, Glu-84, and Arg-123. One can recognise a TrmE-type G domain in the interval 220-379 (GIATAIIGRP…LEKAIADLFF (160 aa)). Asn-230 is a binding site for K(+). Residues 230 to 235 (NVGKSS), 249 to 255 (TDIAGTT), and 274 to 277 (DTAG) each bind GTP. Ser-234 contributes to the Mg(2+) binding site. K(+) contacts are provided by Thr-249, Ile-251, and Thr-254. Thr-255 serves as a coordination point for Mg(2+). Lys-458 lines the (6S)-5-formyl-5,6,7,8-tetrahydrofolate pocket.

Belongs to the TRAFAC class TrmE-Era-EngA-EngB-Septin-like GTPase superfamily. TrmE GTPase family. In terms of assembly, homodimer. Heterotetramer of two MnmE and two MnmG subunits. K(+) is required as a cofactor.

It localises to the cytoplasm. Its function is as follows. Exhibits a very high intrinsic GTPase hydrolysis rate. Involved in the addition of a carboxymethylaminomethyl (cmnm) group at the wobble position (U34) of certain tRNAs, forming tRNA-cmnm(5)s(2)U34. The sequence is that of tRNA modification GTPase MnmE from Bacillus cereus (strain ATCC 14579 / DSM 31 / CCUG 7414 / JCM 2152 / NBRC 15305 / NCIMB 9373 / NCTC 2599 / NRRL B-3711).